A 419-amino-acid polypeptide reads, in one-letter code: Multifunctional CCA protein (419 aa).

ATP contacts are provided by Gly8 and Arg11. CTP-binding residues include Gly8 and Arg11. Residues Asp21 and Asp23 each coordinate Mg(2+). Arg91, Arg149, and Arg152 together coordinate ATP. The CTP site is built by Arg91, Arg149, and Arg152. The HD domain maps to 238–339 (CGVHLMMVID…VRLLERCDAF (102 aa)).

The protein belongs to the tRNA nucleotidyltransferase/poly(A) polymerase family. Bacterial CCA-adding enzyme type 1 subfamily. As to quaternary structure, monomer. Can also form homodimers and oligomers. Mg(2+) is required as a cofactor. Ni(2+) serves as cofactor.

The catalysed reaction is a tRNA precursor + 2 CTP + ATP = a tRNA with a 3' CCA end + 3 diphosphate. It carries out the reaction a tRNA with a 3' CCA end + 2 CTP + ATP = a tRNA with a 3' CCACCA end + 3 diphosphate. In terms of biological role, catalyzes the addition and repair of the essential 3'-terminal CCA sequence in tRNAs without using a nucleic acid template. Adds these three nucleotides in the order of C, C, and A to the tRNA nucleotide-73, using CTP and ATP as substrates and producing inorganic pyrophosphate. tRNA 3'-terminal CCA addition is required both for tRNA processing and repair. Also involved in tRNA surveillance by mediating tandem CCA addition to generate a CCACCA at the 3' terminus of unstable tRNAs. While stable tRNAs receive only 3'-terminal CCA, unstable tRNAs are marked with CCACCA and rapidly degraded. This Variovorax paradoxus (strain S110) protein is Multifunctional CCA protein.